A 542-amino-acid polypeptide reads, in one-letter code: Protein lin-9 homolog (542 aa).

N-acetylalanine is present on alanine 2. The interval 2 to 296 is sufficient for interaction with RB1; sequence AELDQLPDES…QKQRPSRFFM (295 aa). A Glycyl lysine isopeptide (Lys-Gly) (interchain with G-Cter in SUMO2) cross-link involves residue lysine 21. Residues serine 65 and serine 95 each carry the phosphoserine modification. A phosphothreonine mark is found at threonine 96 and threonine 304. 2 positions are modified to phosphoserine: serine 309 and serine 321. Residues 355–413 adopt a coiled-coil conformation; that stretch reads IKKEHIKKLREMNTDAEKLKSYSMPISIEFQRRYATIVLELEQLNKDLNKVLHKVQQYC.

Belongs to the lin-9 family. Component of the DREAM complex (also named LINC complex) at least composed of E2F4, E2F5, LIN9, LIN37, LIN52, LIN54, MYBL1, MYBL2, RBL1, RBL2, RBBP4, TFDP1 and TFDP2. The complex exists in quiescent cells where it represses cell cycle-dependent genes. It dissociates in S phase when LIN9, LIN37, LIN52 and LIN54 form a subcomplex that binds to MYBL2. Interacts with RB1.

It is found in the nucleus. The protein resides in the nucleoplasm. In terms of biological role, acts as a tumor suppressor. Inhibits DNA synthesis. Its ability to inhibit oncogenic transformation is mediated through its association with RB1. Plays a role in the expression of genes required for the G1/S transition. This chain is Protein lin-9 homolog (LIN9), found in Macaca fascicularis (Crab-eating macaque).